A 675-amino-acid chain; its full sequence is DNA ligase (675 aa).

Residues Asp-34–Asp-38, Ser-83–Leu-84, and Glu-116 each bind NAD(+). The active-site N6-AMP-lysine intermediate is the Lys-118. Residues Arg-139, Glu-176, Lys-293, and Lys-317 each coordinate NAD(+). Residues Cys-411, Cys-414, Cys-429, and Cys-435 each contribute to the Zn(2+) site. Residues Ala-594–Arg-675 form the BRCT domain.

It belongs to the NAD-dependent DNA ligase family. LigA subfamily. Mg(2+) serves as cofactor. The cofactor is Mn(2+).

It carries out the reaction NAD(+) + (deoxyribonucleotide)n-3'-hydroxyl + 5'-phospho-(deoxyribonucleotide)m = (deoxyribonucleotide)n+m + AMP + beta-nicotinamide D-nucleotide.. Its function is as follows. DNA ligase that catalyzes the formation of phosphodiester linkages between 5'-phosphoryl and 3'-hydroxyl groups in double-stranded DNA using NAD as a coenzyme and as the energy source for the reaction. It is essential for DNA replication and repair of damaged DNA. This is DNA ligase from Mannheimia succiniciproducens (strain KCTC 0769BP / MBEL55E).